Here is an 859-residue protein sequence, read N- to C-terminus: Leucine--tRNA ligase (859 aa).

Positions 42-52 (PYPSGRLHMGH) match the 'HIGH' region motif. A 'KMSKS' region motif is present at residues 618–622 (KMSKS). Lys621 is an ATP binding site.

This sequence belongs to the class-I aminoacyl-tRNA synthetase family.

It is found in the cytoplasm. The enzyme catalyses tRNA(Leu) + L-leucine + ATP = L-leucyl-tRNA(Leu) + AMP + diphosphate. The chain is Leucine--tRNA ligase from Shewanella pealeana (strain ATCC 700345 / ANG-SQ1).